The primary structure comprises 329 residues: Quinone-oxidoreductase homolog, chloroplastic (329 aa).

It belongs to the zinc-containing alcohol dehydrogenase family. Quinone oxidoreductase subfamily. In terms of processing, the transit peptide is not cleaved.

It is found in the plastid. Its subcellular location is the chloroplast inner membrane. This chain is Quinone-oxidoreductase homolog, chloroplastic (QOR), found in Spinacia oleracea (Spinach).